The following is a 298-amino-acid chain: N-acetylmuramic acid 6-phosphate etherase (298 aa).

One can recognise an SIS domain in the interval 55–218; sequence IHAQVSGGGR…STGLMIKSGK (164 aa). Glu-83 functions as the Proton donor in the catalytic mechanism. Glu-114 is a catalytic residue.

The protein belongs to the GCKR-like family. MurNAc-6-P etherase subfamily. Homodimer.

The catalysed reaction is N-acetyl-D-muramate 6-phosphate + H2O = N-acetyl-D-glucosamine 6-phosphate + (R)-lactate. It participates in amino-sugar metabolism; 1,6-anhydro-N-acetylmuramate degradation. Its pathway is amino-sugar metabolism; N-acetylmuramate degradation. It functions in the pathway cell wall biogenesis; peptidoglycan recycling. Functionally, specifically catalyzes the cleavage of the D-lactyl ether substituent of MurNAc 6-phosphate, producing GlcNAc 6-phosphate and D-lactate. Together with AnmK, is also required for the utilization of anhydro-N-acetylmuramic acid (anhMurNAc) either imported from the medium or derived from its own cell wall murein, and thus plays a role in cell wall recycling. The sequence is that of N-acetylmuramic acid 6-phosphate etherase from Escherichia coli O157:H7 (strain EC4115 / EHEC).